The primary structure comprises 141 residues: ATP synthase epsilon chain (141 aa).

This sequence belongs to the ATPase epsilon chain family. As to quaternary structure, F-type ATPases have 2 components, CF(1) - the catalytic core - and CF(0) - the membrane proton channel. CF(1) has five subunits: alpha(3), beta(3), gamma(1), delta(1), epsilon(1). CF(0) has three main subunits: a, b and c.

Its subcellular location is the cell inner membrane. In terms of biological role, produces ATP from ADP in the presence of a proton gradient across the membrane. In Thioalkalivibrio sulfidiphilus (strain HL-EbGR7), this protein is ATP synthase epsilon chain.